The chain runs to 166 residues: PTS system glucose-specific EIIA component (166 aa).

A PTS EIIA type-1 domain is found at 36-140 (DVVFSEKIVG…SVLTPIVISN (105 aa)). Residues histidine 73 and histidine 88 each contribute to the Zn(2+) site. Histidine 88 functions as the Tele-phosphohistidine intermediate; for EIIA activity in the catalytic mechanism. Histidine 88 carries the post-translational modification Phosphohistidine; by HPr.

As to quaternary structure, heterodimer with glycerol kinase (glpk). It depends on Zn(2+) as a cofactor.

The protein resides in the cytoplasm. The phosphoenolpyruvate-dependent sugar phosphotransferase system (sugar PTS), a major carbohydrate active transport system, catalyzes the phosphorylation of incoming sugar substrates concomitantly with their translocation across the cell membrane. The enzyme II complex composed of PtsG and Crr is involved in glucose transport. This is PTS system glucose-specific EIIA component (crr) from Haemophilus influenzae (strain ATCC 51907 / DSM 11121 / KW20 / Rd).